The primary structure comprises 73 residues: UPF0435 protein BH2488 (73 aa).

This sequence belongs to the UPF0435 family.

This Halalkalibacterium halodurans (strain ATCC BAA-125 / DSM 18197 / FERM 7344 / JCM 9153 / C-125) (Bacillus halodurans) protein is UPF0435 protein BH2488.